Reading from the N-terminus, the 303-residue chain is MIATGHGGAERRTTAGDGTARPVVARTIGELRAARAALTGPVAFVPTMGALHDGHRSLLRIARHHGDHVVVSIFVNPLQFGPAEDFDRYPRTLDADLAMCAAEGVDLVFVPPAAEMYPSEPQVRVSAGPLGERFEGSVRPGHFDGVLTVVAKLFQLVQPDVAVFGRKDAQQLALVRRMVADLNLPVQIIAAPTFREPDGLAASSRNRYLTDADRAQARALPTALTTAAAVAAAGGPPSEMIEMARKVLADAAVTLDYVAVVDEATFDEIDDAEWSQRGEGLCIAAIRVGGTRLIDNMPMRKAD.

A disordered region spans residues 1 to 21; it reads MIATGHGGAERRTTAGDGTAR. An ATP-binding site is contributed by 48–55; it reads MGALHDGH. His55 functions as the Proton donor in the catalytic mechanism. Gln79 provides a ligand contact to (R)-pantoate. Residue Gln79 coordinates beta-alanine. 165–168 lines the ATP pocket; the sequence is GRKD. Position 171 (Gln171) interacts with (R)-pantoate. 202 to 205 contributes to the ATP binding site; that stretch reads ASSR.

This sequence belongs to the pantothenate synthetase family. Homodimer.

It localises to the cytoplasm. The enzyme catalyses (R)-pantoate + beta-alanine + ATP = (R)-pantothenate + AMP + diphosphate + H(+). The protein operates within cofactor biosynthesis; (R)-pantothenate biosynthesis; (R)-pantothenate from (R)-pantoate and beta-alanine: step 1/1. In terms of biological role, catalyzes the condensation of pantoate with beta-alanine in an ATP-dependent reaction via a pantoyl-adenylate intermediate. This is Pantothenate synthetase from Acidothermus cellulolyticus (strain ATCC 43068 / DSM 8971 / 11B).